A 310-amino-acid polypeptide reads, in one-letter code: p-hydroxybenzoic acid efflux pump subunit AaeA (310 aa).

A helical membrane pass occupies residues 12–32; it reads AITVVLVILAFIAIFNAWVYY.

The protein belongs to the membrane fusion protein (MFP) (TC 8.A.1) family.

It localises to the cell inner membrane. Its function is as follows. Forms an efflux pump with AaeB. The protein is p-hydroxybenzoic acid efflux pump subunit AaeA of Escherichia coli O7:K1 (strain IAI39 / ExPEC).